A 146-amino-acid chain; its full sequence is DNA-directed RNA polymerase subunit beta (146 aa).

It belongs to the RNA polymerase beta chain family. In terms of assembly, the RNAP catalytic core consists of 2 alpha, 1 beta, 1 beta' and 1 omega subunit. When a sigma factor is associated with the core the holoenzyme is formed, which can initiate transcription.

It catalyses the reaction RNA(n) + a ribonucleoside 5'-triphosphate = RNA(n+1) + diphosphate. DNA-dependent RNA polymerase catalyzes the transcription of DNA into RNA using the four ribonucleoside triphosphates as substrates. The protein is DNA-directed RNA polymerase subunit beta (rpoB) of Liberibacter africanus (Citrus greening disease).